Consider the following 502-residue polypeptide: Glycerol kinase (502 aa).

Thr-14 serves as a coordination point for ADP. Residues Thr-14, Thr-15, and Ser-16 each contribute to the ATP site. Residue Thr-14 participates in sn-glycerol 3-phosphate binding. Arg-18 contacts ADP. Sn-glycerol 3-phosphate-binding residues include Arg-84, Glu-85, and Tyr-136. Arg-84, Glu-85, and Tyr-136 together coordinate glycerol. Position 232 is a phosphohistidine; by HPr (His-232). Asp-246 contacts sn-glycerol 3-phosphate. Residues Asp-246 and Gln-247 each coordinate glycerol. 2 residues coordinate ADP: Thr-268 and Gly-311. 4 residues coordinate ATP: Thr-268, Gly-311, Gln-315, and Gly-412. Residues Gly-412 and Asn-416 each coordinate ADP.

It belongs to the FGGY kinase family. As to quaternary structure, homotetramer and homodimer (in equilibrium). Post-translationally, the phosphoenolpyruvate-dependent sugar phosphotransferase system (PTS), including enzyme I, and histidine-containing protein (HPr) are required for the phosphorylation, which leads to the activation of the enzyme.

It catalyses the reaction glycerol + ATP = sn-glycerol 3-phosphate + ADP + H(+). Its pathway is polyol metabolism; glycerol degradation via glycerol kinase pathway; sn-glycerol 3-phosphate from glycerol: step 1/1. Its activity is regulated as follows. Activated by phosphorylation and inhibited by fructose 1,6-bisphosphate (FBP). Functionally, key enzyme in the regulation of glycerol uptake and metabolism. Catalyzes the phosphorylation of glycerol to yield sn-glycerol 3-phosphate. This is Glycerol kinase from Streptococcus gordonii (strain Challis / ATCC 35105 / BCRC 15272 / CH1 / DL1 / V288).